We begin with the raw amino-acid sequence, 71 residues long: Large ribosomal subunit protein uL29 (71 aa).

This sequence belongs to the universal ribosomal protein uL29 family.

In Halobacterium salinarum (strain ATCC 700922 / JCM 11081 / NRC-1) (Halobacterium halobium), this protein is Large ribosomal subunit protein uL29 (rpl29).